Consider the following 258-residue polypeptide: Retron Ec83 putative HNH endonuclease (258 aa).

Putative HNH endonuclease component of antiviral defense system retron Ec83, composed of a non-coding RNA (ncRNA), a reverse transcriptase (RT), a probable ATPase and this protein. Expression of retron Ec78 confers protection against bacteriophage T2, T4 and T6. At multiplicity of infection (MOI) of 0.02 cultures slow growth when infected with T4 but do not collapse, at MOI 2 cultures enter growth stasis. The protein is Retron Ec83 putative HNH endonuclease of Escherichia coli.